Consider the following 124-residue polypeptide: Protein MGF 110-4L (124 aa).

A signal peptide spans 1–18 (MLVIFLGILGLLANQVLG). Asparagine 64 carries N-linked (GlcNAc...) asparagine; by host glycosylation. A Prevents secretion from ER motif is present at residues 121–124 (KEDL).

The protein belongs to the asfivirus MGF 110 family.

It is found in the virion. Its subcellular location is the host endoplasmic reticulum-Golgi intermediate compartment. In terms of biological role, causes the redistribution of lumenal ER protein to an enlarged ERGIC compartment. The polypeptide is Protein MGF 110-4L (Ornithodoros (relapsing fever ticks)).